Here is a 170-residue protein sequence, read N- to C-terminus: Acetolactate synthase small subunit (170 aa).

Positions 9 to 83 constitute an ACT domain; that stretch reads TLSVLVEDKP…NVIKIVEQEE (75 aa). Residue lysine 46 forms an Isoglutamyl lysine isopeptide (Lys-Gln) (interchain with Q-Cter in protein Pup) linkage.

Belongs to the acetolactate synthase small subunit family. In terms of assembly, dimer of large and small chains.

The enzyme catalyses 2 pyruvate + H(+) = (2S)-2-acetolactate + CO2. The protein operates within amino-acid biosynthesis; L-isoleucine biosynthesis; L-isoleucine from 2-oxobutanoate: step 1/4. It functions in the pathway amino-acid biosynthesis; L-valine biosynthesis; L-valine from pyruvate: step 1/4. This chain is Acetolactate synthase small subunit (ilvH), found in Mycolicibacterium smegmatis (strain ATCC 700084 / mc(2)155) (Mycobacterium smegmatis).